The following is a 221-amino-acid chain: Octanoyltransferase (221 aa).

Residues 38–220 form the BPL/LPL catalytic domain; the sequence is GEIPDTLLLL…GFREVLGDPG (183 aa). Residues 84–91, 149–151, and 163–165 contribute to the substrate site; these read RGGDATFH, AIG, and GFA. C181 functions as the Acyl-thioester intermediate in the catalytic mechanism.

This sequence belongs to the LipB family.

The protein resides in the cytoplasm. The catalysed reaction is octanoyl-[ACP] + L-lysyl-[protein] = N(6)-octanoyl-L-lysyl-[protein] + holo-[ACP] + H(+). Its pathway is protein modification; protein lipoylation via endogenous pathway; protein N(6)-(lipoyl)lysine from octanoyl-[acyl-carrier-protein]: step 1/2. Functionally, catalyzes the transfer of endogenously produced octanoic acid from octanoyl-acyl-carrier-protein onto the lipoyl domains of lipoate-dependent enzymes. Lipoyl-ACP can also act as a substrate although octanoyl-ACP is likely to be the physiological substrate. The polypeptide is Octanoyltransferase (Rubrobacter xylanophilus (strain DSM 9941 / JCM 11954 / NBRC 16129 / PRD-1)).